The following is a 167-amino-acid chain: NADH-quinone oxidoreductase subunit B 1 (167 aa).

Residues cysteine 38, cysteine 39, cysteine 104, and cysteine 133 each contribute to the [4Fe-4S] cluster site.

It belongs to the complex I 20 kDa subunit family. NDH-1 is composed of 14 different subunits. Subunits NuoB, C, D, E, F, and G constitute the peripheral sector of the complex. [4Fe-4S] cluster serves as cofactor.

The protein localises to the cell membrane. It carries out the reaction a quinone + NADH + 5 H(+)(in) = a quinol + NAD(+) + 4 H(+)(out). In terms of biological role, NDH-1 shuttles electrons from NADH, via FMN and iron-sulfur (Fe-S) centers, to quinones in the respiratory chain. The immediate electron acceptor for the enzyme in this species is believed to be ubiquinone. Couples the redox reaction to proton translocation (for every two electrons transferred, four hydrogen ions are translocated across the cytoplasmic membrane), and thus conserves the redox energy in a proton gradient. The sequence is that of NADH-quinone oxidoreductase subunit B 1 from Roseiflexus castenholzii (strain DSM 13941 / HLO8).